Reading from the N-terminus, the 160-residue chain is MSDSEEHHFESKADAGASKTYPQQAGTVRKNGFIVIKNRPCKVVEVSTSKTGKHGHAKCHFVAIDIFNGKKLEDIVPSSHNCDIPHVNRTEYQLIDISEDGFVSLLTSDGNTKDDLRLPTDETLVAQIKEGFESGKDLVVTVQSAMGEEQICALKDVGPK.

Residues 1-13 show a composition bias toward basic and acidic residues; that stretch reads MSDSEEHHFESKA. The interval 1-22 is disordered; that stretch reads MSDSEEHHFESKADAGASKTYP. Position 53 is a hypusine (Lys-53).

Belongs to the eIF-5A family. Post-translationally, lys-53 undergoes hypusination, a unique post-translational modification that consists in the addition of a butylamino group from spermidine to lysine side chain, leading to the formation of the unusual amino acid hypusine. eIF-5As are the only known proteins to undergo this modification, which is essential for their function.

In terms of biological role, translation factor that promotes translation elongation and termination, particularly upon ribosome stalling at specific amino acid sequence contexts. Binds between the exit (E) and peptidyl (P) site of the ribosome and promotes rescue of stalled ribosome: specifically required for efficient translation of polyproline-containing peptides as well as other motifs that stall the ribosome. Acts as a ribosome quality control (RQC) cofactor by joining the RQC complex to facilitate peptidyl transfer during CAT tailing step. The sequence is that of Eukaryotic translation initiation factor 5A (TIF5A) from Zea mays (Maize).